The primary structure comprises 629 residues: Long-chain-fatty-acid--AMP ligase FadD32 (629 aa).

ATP contacts are provided by residues 186 to 191 (TSGSTR), Ser-341, Ala-345, Asp-468, and Arg-482.

It belongs to the ATP-dependent AMP-binding enzyme family. As to quaternary structure, monomer.

It carries out the reaction a long-chain fatty acid + holo-[ACP] + ATP = a long-chain fatty acyl-[ACP] + AMP + diphosphate. The catalysed reaction is dodecanoate + ATP + H(+) = dodecanoyl-AMP + diphosphate. It catalyses the reaction tetradecanoate + ATP + H(+) = tetradecanoyl-AMP + diphosphate. It participates in lipid metabolism; mycolic acid biosynthesis. With respect to regulation, the acyl-AMP ligase activity is inhibited by the alkylphosphate esters of AMP, adenosine 50-dodecylphosphate (AMPC12) and eicosyl-AMP (AMPC20). In terms of biological role, involved in the biosynthesis of mycolic acids. Catalyzes the activation of long-chain fatty acids as acyl-adenylates (acyl-AMP), which are then transferred to the phosphopantetheine arm of the polyketide synthase Pks13 for further chain extension. Can use dodecanoate (C12) and tetradecanoate (C14). This is Long-chain-fatty-acid--AMP ligase FadD32 (fadD32) from Mycobacterium marinum (strain ATCC BAA-535 / M).